A 100-amino-acid polypeptide reads, in one-letter code: Aspartyl/glutamyl-tRNA(Asn/Gln) amidotransferase subunit C (100 aa).

It belongs to the GatC family. In terms of assembly, heterotrimer of A, B and C subunits.

It catalyses the reaction L-glutamyl-tRNA(Gln) + L-glutamine + ATP + H2O = L-glutaminyl-tRNA(Gln) + L-glutamate + ADP + phosphate + H(+). The enzyme catalyses L-aspartyl-tRNA(Asn) + L-glutamine + ATP + H2O = L-asparaginyl-tRNA(Asn) + L-glutamate + ADP + phosphate + 2 H(+). Functionally, allows the formation of correctly charged Asn-tRNA(Asn) or Gln-tRNA(Gln) through the transamidation of misacylated Asp-tRNA(Asn) or Glu-tRNA(Gln) in organisms which lack either or both of asparaginyl-tRNA or glutaminyl-tRNA synthetases. The reaction takes place in the presence of glutamine and ATP through an activated phospho-Asp-tRNA(Asn) or phospho-Glu-tRNA(Gln). This chain is Aspartyl/glutamyl-tRNA(Asn/Gln) amidotransferase subunit C, found in Streptococcus uberis (strain ATCC BAA-854 / 0140J).